A 286-amino-acid polypeptide reads, in one-letter code: Flagellar filament 33 kDa core protein (286 aa).

This sequence belongs to the bacterial flagellin family. The flagellum consists of an outer layer composed of repeating units of FlaA around a core that contains several antigenically related polypeptides.

Its subcellular location is the periplasmic flagellum. The protein localises to the periplasm. In terms of biological role, component of the core of the flagella. The chain is Flagellar filament 33 kDa core protein from Treponema phagedenis.